We begin with the raw amino-acid sequence, 379 residues long: Chaperone protein DnaJ (379 aa).

The 66-residue stretch at 5–70 (DYYEVLGVSR…QKRAAYDQYG (66 aa)) folds into the J domain. The CR-type zinc finger occupies 134-212 (GVTKEIRIPT…CHGHGRVEKS (79 aa)). Residues Cys147, Cys150, Cys164, Cys167, Cys186, Cys189, Cys200, and Cys203 each contribute to the Zn(2+) site. 4 CXXCXGXG motif repeats span residues 147-154 (CDVCHGSG), 164-171 (CPTCHGAG), 186-193 (CPHCHGRG), and 200-207 (CNKCHGHG).

Belongs to the DnaJ family. Homodimer. Requires Zn(2+) as cofactor.

The protein localises to the cytoplasm. Functionally, participates actively in the response to hyperosmotic and heat shock by preventing the aggregation of stress-denatured proteins and by disaggregating proteins, also in an autonomous, DnaK-independent fashion. Unfolded proteins bind initially to DnaJ; upon interaction with the DnaJ-bound protein, DnaK hydrolyzes its bound ATP, resulting in the formation of a stable complex. GrpE releases ADP from DnaK; ATP binding to DnaK triggers the release of the substrate protein, thus completing the reaction cycle. Several rounds of ATP-dependent interactions between DnaJ, DnaK and GrpE are required for fully efficient folding. Also involved, together with DnaK and GrpE, in the DNA replication of plasmids through activation of initiation proteins. This Yersinia pseudotuberculosis serotype O:1b (strain IP 31758) protein is Chaperone protein DnaJ.